The following is a 164-amino-acid chain: Anterior gradient protein 2 (164 aa).

A signal peptide spans 1 to 20; the sequence is METVLKTLFVLLVATSLTLA. 2 short sequence motifs (homodimer stabilization; interchain) span residues 34–43 and 49–56; these read SRGWGDNLEW and EGLYKAKT.

This sequence belongs to the AGR family. As to quaternary structure, monomer and homodimer.

It localises to the secreted. The protein resides in the endoplasmic reticulum. The sequence is that of Anterior gradient protein 2 from Xenopus tropicalis (Western clawed frog).